Here is a 277-residue protein sequence, read N- to C-terminus: Glutamate racemase (277 aa).

Residues 25–26 (DS) and 57–58 (YG) each bind substrate. The active-site Proton donor/acceptor is Cys-89. Residue 90 to 91 (NT) participates in substrate binding. Residue Cys-204 is the Proton donor/acceptor of the active site. 205–206 (TH) is a substrate binding site.

Belongs to the aspartate/glutamate racemases family.

It carries out the reaction L-glutamate = D-glutamate. Its pathway is cell wall biogenesis; peptidoglycan biosynthesis. In terms of biological role, provides the (R)-glutamate required for cell wall biosynthesis. The polypeptide is Glutamate racemase (Brucella abortus (strain 2308)).